The following is a 252-amino-acid chain: tRNA pseudouridine synthase A (252 aa).

The Nucleophile role is filled by aspartate 52. A substrate-binding site is contributed by tyrosine 111.

This sequence belongs to the tRNA pseudouridine synthase TruA family. As to quaternary structure, homodimer.

It catalyses the reaction uridine(38/39/40) in tRNA = pseudouridine(38/39/40) in tRNA. Functionally, formation of pseudouridine at positions 38, 39 and 40 in the anticodon stem and loop of transfer RNAs. This Parabacteroides distasonis (strain ATCC 8503 / DSM 20701 / CIP 104284 / JCM 5825 / NCTC 11152) protein is tRNA pseudouridine synthase A.